A 474-amino-acid polypeptide reads, in one-letter code: 3-isopropylmalate dehydratase large subunit (474 aa).

[4Fe-4S] cluster contacts are provided by cysteine 355, cysteine 415, and cysteine 418.

Belongs to the aconitase/IPM isomerase family. LeuC type 1 subfamily. In terms of assembly, heterodimer of LeuC and LeuD. [4Fe-4S] cluster serves as cofactor.

It carries out the reaction (2R,3S)-3-isopropylmalate = (2S)-2-isopropylmalate. It functions in the pathway amino-acid biosynthesis; L-leucine biosynthesis; L-leucine from 3-methyl-2-oxobutanoate: step 2/4. Catalyzes the isomerization between 2-isopropylmalate and 3-isopropylmalate, via the formation of 2-isopropylmaleate. This chain is 3-isopropylmalate dehydratase large subunit, found in Shewanella sp. (strain ANA-3).